The sequence spans 101 residues: NAD(P)H-quinone oxidoreductase subunit 4L, chloroplastic (101 aa).

3 helical membrane passes run 2–22 (MLEHVLVLSAYLLSIGIYGLI), 32–52 (MCLELILNAVNMNFVTFSDLF), and 61–81 (IFSIFVIAIAAAEAAIGLAIV).

The protein belongs to the complex I subunit 4L family. In terms of assembly, NDH is composed of at least 16 different subunits, 5 of which are encoded in the nucleus.

It is found in the plastid. The protein resides in the chloroplast thylakoid membrane. It catalyses the reaction a plastoquinone + NADH + (n+1) H(+)(in) = a plastoquinol + NAD(+) + n H(+)(out). It carries out the reaction a plastoquinone + NADPH + (n+1) H(+)(in) = a plastoquinol + NADP(+) + n H(+)(out). Functionally, NDH shuttles electrons from NAD(P)H:plastoquinone, via FMN and iron-sulfur (Fe-S) centers, to quinones in the photosynthetic chain and possibly in a chloroplast respiratory chain. The immediate electron acceptor for the enzyme in this species is believed to be plastoquinone. Couples the redox reaction to proton translocation, and thus conserves the redox energy in a proton gradient. The polypeptide is NAD(P)H-quinone oxidoreductase subunit 4L, chloroplastic (Nandina domestica (Heavenly bamboo)).